The following is a 297-amino-acid chain: Probable endonuclease 4 (297 aa).

Zn(2+)-binding residues include His-69, His-110, Glu-145, Asp-179, His-182, His-214, Asp-227, His-229, and Glu-259.

This sequence belongs to the AP endonuclease 2 family. Zn(2+) serves as cofactor.

The enzyme catalyses Endonucleolytic cleavage to 5'-phosphooligonucleotide end-products.. Functionally, endonuclease IV plays a role in DNA repair. It cleaves phosphodiester bonds at apurinic or apyrimidinic (AP) sites, generating a 3'-hydroxyl group and a 5'-terminal sugar phosphate. This Listeria innocua serovar 6a (strain ATCC BAA-680 / CLIP 11262) protein is Probable endonuclease 4.